A 232-amino-acid polypeptide reads, in one-letter code: Small ribosomal subunit protein uS2 (232 aa).

It belongs to the universal ribosomal protein uS2 family.

This chain is Small ribosomal subunit protein uS2, found in Carboxydothermus hydrogenoformans (strain ATCC BAA-161 / DSM 6008 / Z-2901).